Consider the following 184-residue polypeptide: Large ribosomal subunit protein uL5c (184 aa).

Belongs to the universal ribosomal protein uL5 family. Part of the 50S ribosomal subunit; contacts the 5S rRNA.

It is found in the plastid. Its subcellular location is the chloroplast. Its function is as follows. Binds 5S rRNA, forms part of the central protuberance of the 50S subunit. The sequence is that of Large ribosomal subunit protein uL5c (rpl5) from Mesostigma viride (Green alga).